A 69-amino-acid chain; its full sequence is Probable Sec-independent protein translocase protein TatE (69 aa).

A helical transmembrane segment spans residues 1 to 21 (MEGISIAKLLVIGALIVLLFG). A disordered region spans residues 45–69 (DDQPAAKSSAQDEHPAAISETRPKE). Basic and acidic residues predominate over residues 54-69 (AQDEHPAAISETRPKE).

This sequence belongs to the TatA/E family. TatE subfamily.

The protein resides in the cell inner membrane. Part of the twin-arginine translocation (Tat) system that transports large folded proteins containing a characteristic twin-arginine motif in their signal peptide across membranes. TatE shares overlapping functions with TatA. The protein is Probable Sec-independent protein translocase protein TatE of Dickeya chrysanthemi (strain Ech1591) (Dickeya zeae (strain Ech1591)).